The primary structure comprises 231 residues: Large ribosomal subunit protein uL1 (231 aa).

The protein belongs to the universal ribosomal protein uL1 family. As to quaternary structure, part of the 50S ribosomal subunit.

Functionally, binds directly to 23S rRNA. The L1 stalk is quite mobile in the ribosome, and is involved in E site tRNA release. In terms of biological role, protein L1 is also a translational repressor protein, it controls the translation of the L11 operon by binding to its mRNA. The chain is Large ribosomal subunit protein uL1 from Chlorobaculum tepidum (strain ATCC 49652 / DSM 12025 / NBRC 103806 / TLS) (Chlorobium tepidum).